Consider the following 2774-residue polypeptide: Teneurin-2 (2774 aa).

A Teneurin N-terminal domain is found at 1–375 (MDVKDRRHRS…KPSKYCSWKC (375 aa)). Topologically, residues 1–379 (MDVKDRRHRS…YCSWKCAALS (379 aa)) are cytoplasmic. Serine 90 and serine 124 each carry phosphoserine. Positions 111–271 (TGSDADSDTE…HHHSSANSLN (161 aa)) are disordered. A compositionally biased stretch (polar residues) spans 141–155 (SSGLSSRENSALTLT). Threonine 155 carries the post-translational modification Phosphothreonine. Serine 157 is modified (phosphoserine). The segment covering 159-168 (NENKSDDDNG) has biased composition (basic and acidic residues). Low complexity predominate over residues 174-188 (TSSSSLLPSAQLPSS). Over residues 202–211 (DSNTSHQIMD) the composition is skewed to polar residues. Positions 229 to 240 (SGPQQASSSGPP) are enriched in low complexity. Residues 380–400 (AIAAALLLAILLAYFIAMHLL) traverse the membrane as a helical segment. The Extracellular segment spans residues 401 to 2774 (GLNWQLQPAD…FLRQNEMGKR (2374 aa)). 2 N-linked (GlcNAc...) asparagine glycosylation sites follow: asparagine 443 and asparagine 482. EGF-like domains follow at residues 575-603 (DCPR…ADCA), 605-634 (AACP…AECD), 636-668 (PMNQ…EHCE), 669-701 (EVDC…NCEL), 702-735 (ARVQ…PDCS), 738-766 (VCSV…AACD), 769-797 (VCHP…EHCT), and 808-841 (DGCP…PGCN). Intrachain disulfides connect cysteine 576-cysteine 586, cysteine 580-cysteine 591, cysteine 593-cysteine 602, cysteine 611-cysteine 622, cysteine 624-cysteine 633, cysteine 640-cysteine 651, cysteine 645-cysteine 656, cysteine 658-cysteine 667, cysteine 672-cysteine 683, cysteine 677-cysteine 688, cysteine 690-cysteine 699, cysteine 710-cysteine 723, cysteine 725-cysteine 734, cysteine 739-cysteine 749, cysteine 743-cysteine 754, cysteine 756-cysteine 765, cysteine 770-cysteine 780, cysteine 774-cysteine 785, cysteine 787-cysteine 796, cysteine 810-cysteine 820, cysteine 814-cysteine 829, and cysteine 831-cysteine 840. Residues asparagine 925, asparagine 948, and asparagine 1267 are each glycosylated (N-linked (GlcNAc...) asparagine). NHL repeat units follow at residues 1272 to 1316 (LELR…VKSL), 1342 to 1386 (ARCG…NGII), 1401 to 1452 (LSCD…IAGR), 1474 to 1501 (LESA…INRL), and 1530 to 1573 (CYSG…VSKN). Residues 1583-1602 (YEAASPGEQELYVFNADGIH) form a YD 1 repeat. Asparagine 1616 is a glycosylation site (N-linked (GlcNAc...) asparagine). 3 YD repeats span residues 1619–1639 (YSAD…LKIR), 1682–1701 (YDGN…WTTF), and 1702–1724 (YDYD…TSLH). N-linked (GlcNAc...) asparagine glycosylation is found at asparagine 1712, asparagine 1749, asparagine 1773, asparagine 1807, and asparagine 1892. YD repeat units lie at residues 1895-1914 (YFFN…ERTD), 1936-1954 (YLDK…YIFE), 1955-1975 (YDSS…HSMS), 1982-1999 (YIRN…VIFD), 2000-2021 (YSDD…VFYK), 2022-2039 (YGKL…TAVT), 2042-2062 (YDET…FSCT), 2065-2085 (YRKV…EGMI), 2093-2113 (YHDN…TPLP), 2119-2136 (YDEI…GVIY), 2137-2163 (YDIN…IKEV), 2165-2178 (YEMF…MTVQ), 2179-2202 (YDSM…TKYT), 2205-2225 (YDGD…WRYS), 2226-2246 (YDLN…LMPL), 2248-2268 (YDLR…DDDG), 2280-2300 (YNSK…SVQY), and 2302-2322 (YDGV…LQYF). Asparagine 1993 is a glycosylation site (N-linked (GlcNAc...) asparagine). Residue asparagine 2197 is glycosylated (N-linked (GlcNAc...) asparagine). An N-linked (GlcNAc...) asparagine glycan is attached at asparagine 2337. A YD 23 repeat occupies 2348-2389 (YDLQGHLFAMESSSGEEYYVASDNTGTPLAVFSINGLMIKQL). The N-linked (GlcNAc...) asparagine glycan is linked to asparagine 2648.

The protein belongs to the tenascin family. Teneurin subfamily. As to quaternary structure, homodimer; disulfide-linked. Heterodimer with either TENM1 or TENM3. May also form heterodimer with TENM4. Interacts with ADGRL1 isoform 2. In terms of processing, derives from the membrane form by proteolytic processing. Post-translationally, derives from the plasma membrane form by proteolytic cleavage and translocates to the nucleus. Homophilic binding of the C-terminal extracellular domain stimulates its proteolytic cleavage and release in the cytoplasmic. Is subjected to rapid degradation by the proteasome pathway. Expressed in the brain (at protein level).

The protein localises to the cell membrane. Its subcellular location is the presynaptic cell membrane. It localises to the postsynaptic cell membrane. The protein resides in the endoplasmic reticulum. It is found in the golgi apparatus. The protein localises to the synapse. Its subcellular location is the cell projection. It localises to the dendritic spine. The protein resides in the filopodium. It is found in the growth cone. The protein localises to the nucleus. Its subcellular location is the PML body. In terms of biological role, involved in neural development, regulating the establishment of proper connectivity within the nervous system. Acts as a ligand of the ADGRL1 and ADGRL3 receptors that are expressed at the surface of adjacent cells. Promotes the formation of filopodia and enlarged growth cone in neuronal cells. Mediates axon guidance and homophilic and heterophilic cell-cell adhesion. May function as a cellular signal transducer. Functionally, induces gene transcription inhibition. This Rattus norvegicus (Rat) protein is Teneurin-2 (Tenm2).